We begin with the raw amino-acid sequence, 228 residues long: PKHD-type hydroxylase Reut_A2877 (228 aa).

One can recognise a Fe2OG dioxygenase domain in the interval 80 to 180 (IVYPPMFNRY…RVASFFWIQS (101 aa)). 3 residues coordinate Fe cation: histidine 98, aspartate 100, and histidine 161. Arginine 171 is a binding site for 2-oxoglutarate.

It depends on Fe(2+) as a cofactor. L-ascorbate serves as cofactor.

The sequence is that of PKHD-type hydroxylase Reut_A2877 from Cupriavidus pinatubonensis (strain JMP 134 / LMG 1197) (Cupriavidus necator (strain JMP 134)).